Consider the following 315-residue polypeptide: Holliday junction branch migration complex subunit RuvB (315 aa).

The interval 1 to 168 is large ATPase domain (RuvB-L); it reads MAKKQEIRPK…FGLIGQISNY (168 aa). ATP is bound by residues isoleucine 7, arginine 8, glycine 49, lysine 52, threonine 53, serine 54, 115 to 117, arginine 158, tyrosine 168, and arginine 205; that span reads EDF. Position 53 (threonine 53) interacts with Mg(2+). Residues 169-239 form a small ATPAse domain (RuvB-S) region; that stretch reads QVEDIEKIIK…LVNKTLKQLG (71 aa). The segment at 242 to 315 is head domain (RuvB-H); that stretch reads ENGLNESQVK…QKGISYLERI (74 aa). Residues lysine 297 and arginine 302 each contribute to the DNA site.

Belongs to the RuvB family. In terms of assembly, homohexamer. Forms an RuvA(8)-RuvB(12)-Holliday junction (HJ) complex. HJ DNA is sandwiched between 2 RuvA tetramers; dsDNA enters through RuvA and exits via RuvB. An RuvB hexamer assembles on each DNA strand where it exits the tetramer. Each RuvB hexamer is contacted by two RuvA subunits (via domain III) on 2 adjacent RuvB subunits; this complex drives branch migration. In the full resolvosome a probable DNA-RuvA(4)-RuvB(12)-RuvC(2) complex forms which resolves the HJ.

The protein localises to the cytoplasm. It catalyses the reaction ATP + H2O = ADP + phosphate + H(+). In terms of biological role, the RuvA-RuvB-RuvC complex processes Holliday junction (HJ) DNA during genetic recombination and DNA repair, while the RuvA-RuvB complex plays an important role in the rescue of blocked DNA replication forks via replication fork reversal (RFR). RuvA specifically binds to HJ cruciform DNA, conferring on it an open structure. The RuvB hexamer acts as an ATP-dependent pump, pulling dsDNA into and through the RuvAB complex. RuvB forms 2 homohexamers on either side of HJ DNA bound by 1 or 2 RuvA tetramers; 4 subunits per hexamer contact DNA at a time. Coordinated motions by a converter formed by DNA-disengaged RuvB subunits stimulates ATP hydrolysis and nucleotide exchange. Immobilization of the converter enables RuvB to convert the ATP-contained energy into a lever motion, pulling 2 nucleotides of DNA out of the RuvA tetramer per ATP hydrolyzed, thus driving DNA branch migration. The RuvB motors rotate together with the DNA substrate, which together with the progressing nucleotide cycle form the mechanistic basis for DNA recombination by continuous HJ branch migration. Branch migration allows RuvC to scan DNA until it finds its consensus sequence, where it cleaves and resolves cruciform DNA. The protein is Holliday junction branch migration complex subunit RuvB of Mycoplasmopsis pulmonis (strain UAB CTIP) (Mycoplasma pulmonis).